Consider the following 183-residue polypeptide: Bifunctional protein PyrR (183 aa).

Positions 98 to 110 (VVLVDDVLYTGRT) match the PRPP-binding motif.

It belongs to the purine/pyrimidine phosphoribosyltransferase family. PyrR subfamily.

It carries out the reaction UMP + diphosphate = 5-phospho-alpha-D-ribose 1-diphosphate + uracil. Regulates the transcription of the pyrimidine nucleotide (pyr) operon in response to exogenous pyrimidines. Functionally, also displays a weak uracil phosphoribosyltransferase activity which is not physiologically significant. In Roseiflexus sp. (strain RS-1), this protein is Bifunctional protein PyrR.